Here is a 523-residue protein sequence, read N- to C-terminus: GMP synthase [glutamine-hydrolyzing] (523 aa).

The 198-residue stretch at K8–K205 folds into the Glutamine amidotransferase type-1 domain. The active-site Nucleophile is the C85. Residues H179 and E181 contribute to the active site. The 193-residue stretch at W206–R398 folds into the GMPS ATP-PPase domain. S233–S239 is an ATP binding site.

As to quaternary structure, homodimer.

It carries out the reaction XMP + L-glutamine + ATP + H2O = GMP + L-glutamate + AMP + diphosphate + 2 H(+). Its pathway is purine metabolism; GMP biosynthesis; GMP from XMP (L-Gln route): step 1/1. Catalyzes the synthesis of GMP from XMP. The polypeptide is GMP synthase [glutamine-hydrolyzing] (Glaesserella parasuis serovar 5 (strain SH0165) (Haemophilus parasuis)).